A 380-amino-acid polypeptide reads, in one-letter code: N-acetylneuraminate epimerase (380 aa).

An N-terminal signal peptide occupies residues 1-21; that stretch reads MKFTKTALFTVLAATAFAAQA. 7 Kelch repeats span residues 42-86, 88-140, 142-176, 177-222, 225-274, 296-349, and 351-380; these read TVYV…AGVN, KLYV…AADG, KIYF…AIFD, PYFN…AIKD, LLVV…IAGG, ANYE…SYNN, and VLLI…LTVE. Glutamate 231 serves as the catalytic Proton acceptor.

The protein belongs to the NanM family. As to quaternary structure, homodimer.

The protein resides in the periplasm. It carries out the reaction N-acetyl-alpha-neuraminate = N-acetyl-beta-neuraminate. Converts alpha-N-acetylneuranimic acid (Neu5Ac) to the beta-anomer, accelerating the equilibrium between the alpha- and beta-anomers. Probably facilitates sialidase-negative bacteria to compete successfully for limited amounts of extracellular Neu5Ac, which is likely taken up in the beta-anomer. In addition, the rapid removal of sialic acid from solution might be advantageous to the bacterium to damp down host responses. In Pasteurella multocida (strain Pm70), this protein is N-acetylneuraminate epimerase.